Here is a 106-residue protein sequence, read N- to C-terminus: uncharacterized protein (106 aa).

A helical transmembrane segment spans residues 9–27 (ALAALAFTLGLIGLAAWAL). The disordered stretch occupies residues 84 to 106 (TPKGPPPASALSPSPVAEPEPVV).

This sequence belongs to the FliO/MopB family.

It is found in the cell membrane. The protein resides in the bacterial flagellum basal body. This is an uncharacterized protein from Caulobacter vibrioides (strain ATCC 19089 / CIP 103742 / CB 15) (Caulobacter crescentus).